Reading from the N-terminus, the 140-residue chain is Large ribosomal subunit protein uL14 (140 aa).

S17 is modified (phosphoserine). At Y38 the chain carries Phosphotyrosine.

The protein belongs to the universal ribosomal protein uL14 family. As to quaternary structure, component of the large ribosomal subunit.

It localises to the cytoplasm. Its function is as follows. Component of the large ribosomal subunit. The ribosome is a large ribonucleoprotein complex responsible for the synthesis of proteins in the cell. In Canis lupus familiaris (Dog), this protein is Large ribosomal subunit protein uL14 (RPL23).